The following is a 1454-amino-acid chain: Mediator of RNA polymerase II transcription subunit 14 (1454 aa).

The disordered stretch occupies residues 1–34 (MAPVQLENHQLVPPGGGGGGSGGPPSAPAPPPPG). Residues 14 to 23 (PGGGGGGSGG) show a composition bias toward gly residues. Pro residues predominate over residues 25-34 (PSAPAPPPPG). Positions 69 to 73 (LTDLL) match the LXXLL motif 1 motif. The interaction with STAT2 stretch occupies residues 188–566 (KQATLHQLNQ…VPNKPTQLSY (379 aa)). Residues 500–824 (LGQQRCKQSI…TKGSSISIQW (325 aa)) form an interaction with SREBF1 region. Phosphoserine occurs at positions 617 and 986. A disordered region spans residues 973–1167 (ARRRSVNEDD…MPPPRKLPQR (195 aa)). Positions 1001 to 1011 (QPPPQQQPFPK) are enriched in pro residues. Composition is skewed to polar residues over residues 1024 to 1054 (PPTS…SSPS) and 1092 to 1101 (DPSSPYTMVS). A phosphoserine mark is found at serine 1112, serine 1119, serine 1128, serine 1136, and serine 1144. Residues 1147 to 1156 (AGTSSQTMPT) are compositionally biased toward polar residues. The LXXLL motif 2 signature appears at 1182 to 1186 (LNILL).

It belongs to the Mediator complex subunit 14 family. In terms of assembly, interacts with GATA1. Component of the Mediator complex, which is composed of MED1, MED4, MED6, MED7, MED8, MED9, MED10, MED11, MED12, MED13, MED13L, MED14, MED15, MED16, MED17, MED18, MED19, MED20, MED21, MED22, MED23, MED24, MED25, MED26, MED27, MED29, MED30, MED31, CCNC, CDK8 and CDC2L6/CDK11. The MED12, MED13, CCNC and CDK8 subunits form a distinct module termed the CDK8 module. Mediator containing the CDK8 module is less active than Mediator lacking this module in supporting transcriptional activation. Individual preparations of the Mediator complex lacking one or more distinct subunits have been variously termed ARC, CRSP, DRIP, PC2, SMCC and TRAP. Interacts with AR, ESR1, SREBF1 and STAT2. As to expression, ubiquitous.

Its subcellular location is the nucleus. In terms of biological role, component of the Mediator complex, a coactivator involved in the regulated transcription of nearly all RNA polymerase II-dependent genes. Mediator functions as a bridge to convey information from gene-specific regulatory proteins to the basal RNA polymerase II transcription machinery. Mediator is recruited to promoters by direct interactions with regulatory proteins and serves as a scaffold for the assembly of a functional preinitiation complex with RNA polymerase II and the general transcription factors. In Homo sapiens (Human), this protein is Mediator of RNA polymerase II transcription subunit 14 (MED14).